Consider the following 326-residue polypeptide: Aldo-keto reductase family 1 member D1 (326 aa).

NADP(+) is bound by residues 22–26 (GLGTY) and Asp-53. Tyr-26 provides a ligand contact to substrate. Positions 58, 89, 120, and 132 each coordinate substrate. Tyr-58 acts as the Proton donor in catalysis. Residues 169–170 (SN), Gln-193, and 219–224 (YSPLGT) contribute to the NADP(+) site. Position 230 (Trp-230) interacts with substrate. 273-283 (KSFNPERIKEN) is a binding site for NADP(+).

It belongs to the aldo/keto reductase family.

It localises to the cytoplasm. It carries out the reaction 5beta-cholestan-3-one + NADP(+) = cholest-4-en-3-one + NADPH + H(+). The catalysed reaction is 4,5beta-dihydrocortisone + NADP(+) = cortisone + NADPH + H(+). It catalyses the reaction cortisol + NADPH + H(+) = 5beta-dihydrocortisol + NADP(+). The enzyme catalyses corticosterone + NADPH + H(+) = 5beta-dihydrocorticosterone + NADP(+). It carries out the reaction 7alpha,12alpha-dihydroxycholest-4-en-3-one + NADPH + H(+) = 7alpha,12alpha-dihydroxy-5beta-cholestan-3-one + NADP(+). The catalysed reaction is 7alpha-hydroxycholest-4-en-3-one + NADPH + H(+) = 7alpha-hydroxy-5beta-cholestan-3-one + NADP(+). It catalyses the reaction epitestosterone + NADPH + H(+) = 5beta-dihydroepitestosterone + NADP(+). The enzyme catalyses androst-4-ene-3,17-dione + NADPH + H(+) = 5beta-androstane-3,17-dione + NADP(+). It carries out the reaction progesterone + NADPH + H(+) = 5beta-pregnan-3,20-dione + NADP(+). The catalysed reaction is 21-hydroxyprogesterone + NADPH + H(+) = 5beta-dihydrodeoxycorticosterone + NADP(+). It catalyses the reaction aldosterone + NADPH + H(+) = 5beta-dihydroaldosterone + NADP(+). The enzyme catalyses 17beta-hydroxyandrosta-1,4-dien-3-one + NADPH + H(+) = 17beta-hydroxy-5beta-androst-1-en-3-one + NADP(+). It carries out the reaction 17beta-hydroxyestr-4-en-3-one + NADPH + H(+) = 17beta-hydroxy-5beta-estran-3-one + NADP(+). The catalysed reaction is 5beta-dihydrotestosterone + NADP(+) = testosterone + NADPH + H(+). It catalyses the reaction androst-4-ene-3,11,17-trione + NADPH + H(+) = 17beta-hydroxyandrost-4-ene-3,11-dione + NADP(+). With respect to regulation, subject to inhibition by high substrate concentrations. Inhibited by testosterone concentrations above 10 uM. Inhibited by the primary and secondary bile acids chenodeoxycholic acid and ursodeoxycholic acid. Catalyzes the stereospecific NADPH-dependent reduction of the C4-C5 double bond of bile acid intermediates and steroid hormones carrying a delta(4)-3-one structure to yield an A/B cis-ring junction. This cis-configuration is crucial for bile acid biosynthesis and plays important roles in steroid metabolism. Capable of reducing a broad range of delta-(4)-3-ketosteroids from C18 (such as, 17beta-hydroxyestr-4-en-3-one) to C27 (such as, 7alpha-hydroxycholest-4-en-3-one). The protein is Aldo-keto reductase family 1 member D1 (AKR1D1) of Oryctolagus cuniculus (Rabbit).